The following is a 533-amino-acid chain: Acid-sensing ion channel 3 (533 aa).

At 1–19 the chain is on the cytoplasmic side; it reads MKPRSGLEEAQRRQASDIR. Residues 20 to 40 form a helical membrane-spanning segment; that stretch reads VFASSCTMHGLGHIFGPGGLT. Phosphothreonine; by PKC is present on Thr40. The Extracellular segment spans residues 41–435; the sequence is LRRGLWATAV…EQKAAYEVSE (395 aa). 7 disulfide bridges follow: Cys93–Cys187, Cys165–Cys172, Cys283–Cys372, Cys317–Cys368, Cys321–Cys366, Cys330–Cys352, and Cys332–Cys344. Asn176 is a glycosylation site (N-linked (GlcNAc...) asparagine). The interval 286-310 is disordered; sequence ASLDPDDFDPEPSDPLGSPRPRPSP. Asn400 carries N-linked (GlcNAc...) asparagine glycosylation. Residues 436–456 form a helical membrane-spanning segment; sequence LLGDIGGQMGLFIGASLLTIL. The GAS motif; ion selectivity filter motif lies at 449–451; it reads GAS. Residues 457 to 533 lie on the Cytoplasmic side of the membrane; sequence EILDYLCEVF…HRTCYLVTRL (77 aa). Ser523 carries the post-translational modification Phosphoserine; by PKC. Positions 530–533 match the PDZ-binding motif; it reads VTRL.

Belongs to the amiloride-sensitive sodium channel (TC 1.A.6) family. ASIC3 subfamily. In terms of assembly, can form homotrimeric channels. Heterotrimer; forms functional heterotrimers producing channel with different properties. Forms heterotrimers with ASIC2; gives rise to a biphasic current with a sustained current which discriminates poorly between Na(+) and K(+). Interacts with STOM; inhibits ASIC3 acid-evoked current. Interacts with LIN7B (via PDZ domain); increases ASIC3 expression at the plasma membrane. Interacts with MAGI1 (via PDZ domain); probably regulates ASIC3. Interacts with GOPC (via PDZ domain); probably regulates ASIC3. Interacts with DLG4 (via PDZ domain); reduces ASIC3 expression at the plasma membrane. Could be phosphorylated by PKC, promoting activation of ASIC2/ASIC3 heterotrimers. As to expression, expressed in sciatic nerve and dorsal root ganglion (at protein level). Expressed in sensory neurons of dorsal root ganglion. Expressed in Golgi interneurons in the granular layer. Also found in superior cervical ganglia, spinal cord and brain stem.

Its subcellular location is the cell membrane. It is found in the cytoplasm. It catalyses the reaction Na(+)(in) = Na(+)(out). It carries out the reaction K(+)(in) = K(+)(out). The enzyme catalyses Ca(2+)(in) = Ca(2+)(out). With respect to regulation, inhibited by the diuretic drug amiloride. Inhibited by gadolinium ions. Inhibited by extracellular Ca(2+). Activated by lactate. Salicylic acid, diclofenac and aspirin inhibit the sustained current component. Activated by the vertebrate neuropeptides NPFF and NPSF, and the related FMRFamide. Specifically and reversibly inhibited by the a sea anemone toxin APETx2. ASIC3-containing channels are potentiated by the cono-RFamide CNF-Tx1.1, and probably CNF-Tx1.2 and CNF-Tx1.3 (AC P0DL71). Its function is as follows. Forms pH-gated heterotrimeric sodium channels that act as postsynaptic excitatory receptors in the nervous system. Upon extracellular acidification, these channels generate a biphasic current with a fast inactivating and a slow sustained phase. ASIC3 is more sensitive to protons and gates between closed, open, and desensitized states faster than other ASICs. Displays high selectivity for sodium ions but can also permit the permeation of other cations. As a neuronal acid sensor, probably contributes to mechanoreception, acid nociception, and heat nociception. By forming heterotrimeric channels with ASIC2, generates a biphasic current with a fast inactivating and a slow sustained phase, which in sensory neurons is proposed to mediate the pain induced by acidosis that occurs in ischemic, damaged or inflamed tissues. In Rattus norvegicus (Rat), this protein is Acid-sensing ion channel 3.